The chain runs to 150 residues: UPF0178 protein BceJ2315_16760 (150 aa).

Belongs to the UPF0178 family.

The polypeptide is UPF0178 protein BceJ2315_16760 (Burkholderia cenocepacia (strain ATCC BAA-245 / DSM 16553 / LMG 16656 / NCTC 13227 / J2315 / CF5610) (Burkholderia cepacia (strain J2315))).